The sequence spans 52 residues: ATP synthase protein 8 (52 aa).

A helical transmembrane segment spans residues M7–I27.

It belongs to the ATPase protein 8 family. F-type ATPases have 2 components, CF(1) - the catalytic core - and CF(0) - the membrane proton channel.

It is found in the mitochondrion membrane. In terms of biological role, mitochondrial membrane ATP synthase (F(1)F(0) ATP synthase or Complex V) produces ATP from ADP in the presence of a proton gradient across the membrane which is generated by electron transport complexes of the respiratory chain. F-type ATPases consist of two structural domains, F(1) - containing the extramembraneous catalytic core and F(0) - containing the membrane proton channel, linked together by a central stalk and a peripheral stalk. During catalysis, ATP synthesis in the catalytic domain of F(1) is coupled via a rotary mechanism of the central stalk subunits to proton translocation. Part of the complex F(0) domain. Minor subunit located with subunit a in the membrane. The chain is ATP synthase protein 8 (mt:ATPase8) from Apis mellifera ligustica (Common honeybee).